The chain runs to 431 residues: Protoheme IX farnesyltransferase, mitochondrial (431 aa).

The transit peptide at 1-33 directs the protein to the mitochondrion; it reads MWRRSVVYRFSSRISVSSSLPNPRLIPWSRELC. Transmembrane regions (helical) follow at residues 109–129, 131–153, 174–194, 200–220, 226–246, 255–275, 298–317, 322–344, and 356–376; these read LVVATSGTGYILGTGNAAISF, GLCYTCAGTMMIAASANSLNQIF, ISVPHAVAWATIAGASGACLL, MLAAGLASANLVLYAFVYTPL, INTWVGAVVGAIPPLLGWAAA, MILPAALYFWQIPHFMALAHL, IAAVALRNCFYMIPLGFIAY, TSSWFCLESTLLTLAIAATAFSF, and MFHASLLFLPVFMSGLLLHRV.

The protein belongs to the ubiA prenyltransferase (TC 3.D.4.8) family.

It localises to the mitochondrion inner membrane. The enzyme catalyses heme b + (2E,6E)-farnesyl diphosphate + H2O = Fe(II)-heme o + diphosphate. In terms of biological role, converts protoheme IX and farnesyl diphosphate to heme O. In Arabidopsis thaliana (Mouse-ear cress), this protein is Protoheme IX farnesyltransferase, mitochondrial (COX10).